The following is a 561-amino-acid chain: Dihydroxy-acid dehydratase (561 aa).

Cys-50 contacts [2Fe-2S] cluster. Asp-82 contacts Mg(2+). A [2Fe-2S] cluster-binding site is contributed by Cys-123. Residues Asp-124 and Lys-125 each coordinate Mg(2+). Position 125 is an N6-carboxylysine (Lys-125). Cys-195 contacts [2Fe-2S] cluster. Glu-447 contributes to the Mg(2+) binding site. Ser-473 serves as the catalytic Proton acceptor.

This sequence belongs to the IlvD/Edd family. As to quaternary structure, homodimer. [2Fe-2S] cluster serves as cofactor. It depends on Mg(2+) as a cofactor.

It catalyses the reaction (2R)-2,3-dihydroxy-3-methylbutanoate = 3-methyl-2-oxobutanoate + H2O. The catalysed reaction is (2R,3R)-2,3-dihydroxy-3-methylpentanoate = (S)-3-methyl-2-oxopentanoate + H2O. The protein operates within amino-acid biosynthesis; L-isoleucine biosynthesis; L-isoleucine from 2-oxobutanoate: step 3/4. It functions in the pathway amino-acid biosynthesis; L-valine biosynthesis; L-valine from pyruvate: step 3/4. Its function is as follows. Functions in the biosynthesis of branched-chain amino acids. Catalyzes the dehydration of (2R,3R)-2,3-dihydroxy-3-methylpentanoate (2,3-dihydroxy-3-methylvalerate) into 2-oxo-3-methylpentanoate (2-oxo-3-methylvalerate) and of (2R)-2,3-dihydroxy-3-methylbutanoate (2,3-dihydroxyisovalerate) into 2-oxo-3-methylbutanoate (2-oxoisovalerate), the penultimate precursor to L-isoleucine and L-valine, respectively. The sequence is that of Dihydroxy-acid dehydratase from Crocosphaera subtropica (strain ATCC 51142 / BH68) (Cyanothece sp. (strain ATCC 51142)).